The following is a 341-amino-acid chain: Methionine import ATP-binding protein MetN 1 (341 aa).

Residues 2–241 enclose the ABC transporter domain; it reads IKLNQIVKRY…PQHEVTKRFV (240 aa). Residue 38-45 coordinates ATP; that stretch reads GFSGAGKS.

Belongs to the ABC transporter superfamily. Methionine importer (TC 3.A.1.24) family. As to quaternary structure, the complex is composed of two ATP-binding proteins (MetN), two transmembrane proteins (MetI) and a solute-binding protein (MetQ).

The protein resides in the cell membrane. It catalyses the reaction L-methionine(out) + ATP + H2O = L-methionine(in) + ADP + phosphate + H(+). The enzyme catalyses D-methionine(out) + ATP + H2O = D-methionine(in) + ADP + phosphate + H(+). Its function is as follows. Part of the ABC transporter complex MetNIQ involved in methionine import. Responsible for energy coupling to the transport system. This chain is Methionine import ATP-binding protein MetN 1, found in Staphylococcus epidermidis (strain ATCC 12228 / FDA PCI 1200).